The sequence spans 301 residues: Probable 5-dehydro-4-deoxyglucarate dehydratase (301 aa).

This sequence belongs to the DapA family.

The enzyme catalyses 5-dehydro-4-deoxy-D-glucarate + H(+) = 2,5-dioxopentanoate + CO2 + H2O. The protein operates within carbohydrate acid metabolism; D-glucarate degradation; 2,5-dioxopentanoate from D-glucarate: step 2/2. This chain is Probable 5-dehydro-4-deoxyglucarate dehydratase, found in Xanthobacter autotrophicus (strain ATCC BAA-1158 / Py2).